A 219-amino-acid polypeptide reads, in one-letter code: Thiopurine S-methyltransferase (219 aa).

S-adenosyl-L-methionine-binding residues include tryptophan 10, leucine 45, glutamate 66, and arginine 123.

This sequence belongs to the class I-like SAM-binding methyltransferase superfamily. TPMT family.

The protein resides in the cytoplasm. The enzyme catalyses S-adenosyl-L-methionine + a thiopurine = S-adenosyl-L-homocysteine + a thiopurine S-methylether.. This chain is Thiopurine S-methyltransferase, found in Shewanella pealeana (strain ATCC 700345 / ANG-SQ1).